The primary structure comprises 538 residues: Beta-1,4-mannosyl-glycoprotein 4-beta-N-acetylglucosaminyltransferase (538 aa).

Residues 1–7 (MKMRRYK) are Cytoplasmic-facing. A helical; Signal-anchor for type II membrane protein transmembrane segment spans residues 8-23 (LFLMFCMAGLCLISFL). At 24 to 538 (HFFKTLSYVT…VRGKLDTTEG (515 aa)) the chain is on the lumenal side. The segment at 121–151 (GTRMLEKPSPGRTEEKTKVAEGSSVRGPARR) is disordered. 3 N-linked (GlcNAc...) asparagine glycosylation sites follow: Asn-245, Asn-263, and Asn-401. The segment at 509 to 538 (PKSTVEGGRRNQGSDGRSSAVRGKLDTTEG) is disordered.

The protein belongs to the glycosyltransferase 17 family. As to quaternary structure, interacts with MGAT4D.

It is found in the golgi apparatus membrane. It carries out the reaction N(4)-{beta-D-GlcNAc-(1-&gt;2)-alpha-D-Man-(1-&gt;3)-[beta-D-GlcNAc-(1-&gt;2)-alpha-D-Man-(1-&gt;6)]-beta-D-Man-(1-&gt;4)-beta-D-GlcNAc-(1-&gt;4)-beta-D-GlcNAc}-L-asparaginyl-[protein] + UDP-N-acetyl-alpha-D-glucosamine = N(4)-{beta-D-GlcNAc-(1-&gt;2)-alpha-D-Man-(1-&gt;3)-[beta-D-GlcNAc-(1-&gt;4)]-[beta-D-GlcNAc-(1-&gt;2)-alpha-D-Man-(1-&gt;6)]-beta-D-Man-(1-&gt;4)-beta-D-GlcNAc-(1-&gt;4)-beta-D-GlcNAc}-L-asparaginyl-[protein] + UDP + H(+). It functions in the pathway protein modification; protein glycosylation. Functionally, it is involved in the regulation of the biosynthesis and biological function of glycoprotein oligosaccharides. Catalyzes the addition of N-acetylglucosamine in beta 1-4 linkage to the beta-linked mannose of the trimannosyl core of N-linked sugar chains, called bisecting N-acetylglucosamine (GlcNAc). It is one of the most important enzymes involved in the regulation of the biosynthesis of glycoprotein oligosaccharides. The addition of this bisecting GlcNAc residue alters not only the composition, but also the conformation of the N-glycan. The introduction of the bisecting GlcNAc residue results in the suppression of further processing and elongation of N-glycans, precluding the formation of beta-1,6 GlcNAc branching, catalyzed by MGAT5 since it is unable to use the bisected oligosaccharide as a substrate. Addition of bisecting N-acetylglucosamine to CDH1/E-cadherin modulates CDH1 cell membrane location. Inhibits NeuAc-alpha-2,3-Gal-beta-1,4-GlcNAc- formation which modulates sialylation levels and plays a role in cell migration regulation. In brain, addition of bisecting N-acetylglucosamine to BACE1 blocks its lysosomal targeting in response to oxidative stress and further degradation which increases its location to early endosome and the APP cleavage. The polypeptide is Beta-1,4-mannosyl-glycoprotein 4-beta-N-acetylglucosaminyltransferase (Mgat3) (Rattus norvegicus (Rat)).